A 405-amino-acid polypeptide reads, in one-letter code: MSPIEKSSKLENVCYDIRGPVLKEAKRLEEEGNKVLKLNIGNPAPFGFDAPDEILVDVIRNLPTAQGYCDSKGLYSARKAIMQHYQARGMRDVTVEDIYIGNGVSELIVQAMQALLNSGDEMLVPAPDYPLWTAAVSLSSGKAVHYLCDESSDWFPDLDDIRAKITPRTRGIVIINPNNPTGAVYSKELLMEIVEIARQHNLIIFADEIYDKILYDDAEHHSIAPLAPDLLTITFNGLSKTYRVAGFRQGWMVLNGPKKHAKGYIEGLEMLASMRLCANVPAQHAIQTALGGYQSISEFITPGGRLYEQRNRAWELINDIPGVSCVKPRGALYMFPKIDAKRFNIHDDQKMVLDFLLQEKVLLVQGTAFNWPWPDHFRIVTLPRVDDIELSLSKFARFLSGYHQL.

Residues Gly-41 and Asn-179 each coordinate L-alanine. Position 240 is an N6-(pyridoxal phosphate)lysine (Lys-240). L-alanine is bound at residue Arg-378.

Belongs to the class-I pyridoxal-phosphate-dependent aminotransferase family. Homodimer. Pyridoxal 5'-phosphate serves as cofactor.

It localises to the cytoplasm. It catalyses the reaction L-alanine + 2-oxoglutarate = pyruvate + L-glutamate. The protein operates within amino-acid biosynthesis; L-alanine biosynthesis. Functionally, involved in the biosynthesis of alanine. Catalyzes the transamination of pyruvate by glutamate, leading to the formation of L-alanine and 2-oxoglutarate. Is also able to catalyze the reverse reaction. This chain is Glutamate-pyruvate aminotransferase AlaA, found in Escherichia coli (strain K12).